The chain runs to 307 residues: Protein phosphatase EYA (307 aa).

The interval 1 to 15 (MNNDTSKKLGTLVSD) is necessary for optimum phosphatase activity. D25 functions as the Nucleophile in the catalytic mechanism. Mg(2+)-binding residues include D25, D27, and D253. D27 functions as the Proton donor in the catalytic mechanism.

Belongs to the HAD-like hydrolase superfamily. EYA family. The cofactor is Mg(2+).

The enzyme catalyses O-phospho-L-tyrosyl-[protein] + H2O = L-tyrosyl-[protein] + phosphate. With respect to regulation, inhibited by EDTA. Possesses phosphatase activity toward para-nitrophenyl phosphate (pNPP) in vitro. Possesses phosphatase activity toward several phosphotyrosine-containing peptides in vitro, with low peptide substrate specificity. In Arabidopsis thaliana (Mouse-ear cress), this protein is Protein phosphatase EYA.